The following is a 196-amino-acid chain: Potassium-transporting ATPase KdpC subunit (196 aa).

Residues 7–27 traverse the membrane as a helical segment; the sequence is PALVLFFVLTLLTGVAYPLAV.

This sequence belongs to the KdpC family. As to quaternary structure, the system is composed of three essential subunits: KdpA, KdpB and KdpC.

It is found in the cell inner membrane. Part of the high-affinity ATP-driven potassium transport (or Kdp) system, which catalyzes the hydrolysis of ATP coupled with the electrogenic transport of potassium into the cytoplasm. This subunit acts as a catalytic chaperone that increases the ATP-binding affinity of the ATP-hydrolyzing subunit KdpB by the formation of a transient KdpB/KdpC/ATP ternary complex. The sequence is that of Potassium-transporting ATPase KdpC subunit from Polaromonas naphthalenivorans (strain CJ2).